A 322-amino-acid polypeptide reads, in one-letter code: Cytochrome f (322 aa).

Positions 1–36 (MQKNRNTFSWVKEQMTRCISVSMMIYVITRASISNA) are cleaved as a signal peptide. 4 residues coordinate heme: Tyr-37, Cys-57, Cys-60, and His-61. The chain crosses the membrane as a helical span at residues 288 to 308 (IQGLLFFLASVILAQIFLVLK).

Belongs to the cytochrome f family. In terms of assembly, the 4 large subunits of the cytochrome b6-f complex are cytochrome b6, subunit IV (17 kDa polypeptide, petD), cytochrome f and the Rieske protein, while the 4 small subunits are PetG, PetL, PetM and PetN. The complex functions as a dimer. Heme serves as cofactor.

The protein localises to the plastid. It localises to the chloroplast thylakoid membrane. Functionally, component of the cytochrome b6-f complex, which mediates electron transfer between photosystem II (PSII) and photosystem I (PSI), cyclic electron flow around PSI, and state transitions. The sequence is that of Cytochrome f from Nymphaea alba (White water-lily).